Consider the following 227-residue polypeptide: MKAVVLLSGGMDSLVTTAIAHNEGLQLAAMHVNYGQRTWQRELESFRSIAGHYGIGELLEVNADFLGTIGGSSLTDHTMAVSGADLQGTAIPTSYVPFRNACFLSMAVSWAEVIGAQKLYIGAVEEDSSGYPDCRKVFYDAFNKVIELGTKPETGIEILTPLIAMQKAGIVEKGMELDAPFHYSWSCYKSEGKACGVCDSCARRLRAFELVGVRDPIDYDVRPQYIH.

7–17 (LSGGMDSLVTT) is a binding site for ATP. Residues Cys-187, Cys-195, Cys-198, and Cys-201 each coordinate Zn(2+).

The protein belongs to the QueC family. The cofactor is Zn(2+).

It catalyses the reaction 7-carboxy-7-deazaguanine + NH4(+) + ATP = 7-cyano-7-deazaguanine + ADP + phosphate + H2O + H(+). The protein operates within purine metabolism; 7-cyano-7-deazaguanine biosynthesis. In terms of biological role, catalyzes the ATP-dependent conversion of 7-carboxy-7-deazaguanine (CDG) to 7-cyano-7-deazaguanine (preQ(0)). In Chlorobium phaeovibrioides (strain DSM 265 / 1930) (Prosthecochloris vibrioformis (strain DSM 265)), this protein is 7-cyano-7-deazaguanine synthase.